A 310-amino-acid chain; its full sequence is D-alanine--D-alanine ligase (310 aa).

Residues 107–305 form the ATP-grasp domain; it reads KKVWQSAGLP…FSALVQSILA (199 aa). 134–189 lines the ATP pocket; sequence EQLHCQDFVIKPALEGSSVGVSRVKNQEQLAAAIPFAGGARAKIMAEPWIVGRELT. Residues Asp-259, Glu-272, and Asn-274 each coordinate Mg(2+).

This sequence belongs to the D-alanine--D-alanine ligase family. It depends on Mg(2+) as a cofactor. Requires Mn(2+) as cofactor.

Its subcellular location is the cytoplasm. It catalyses the reaction 2 D-alanine + ATP = D-alanyl-D-alanine + ADP + phosphate + H(+). It participates in cell wall biogenesis; peptidoglycan biosynthesis. Its function is as follows. Cell wall formation. This chain is D-alanine--D-alanine ligase, found in Dichelobacter nodosus (strain VCS1703A).